The following is a 490-amino-acid chain: Cardiolipin synthase A (490 aa).

Helical transmembrane passes span 4-24 (YLFT…IIIV) and 39-59 (AAWL…WFLL). PLD phosphodiesterase domains are found at residues 220-247 (MDLR…VDPY) and 403-430 (KKGL…DMRS). Active-site residues include H225, K227, D232, H408, K410, and D415.

It belongs to the phospholipase D family. Cardiolipin synthase subfamily. ClsA sub-subfamily.

It is found in the cell membrane. It carries out the reaction 2 a 1,2-diacyl-sn-glycero-3-phospho-(1'-sn-glycerol) = a cardiolipin + glycerol. Its function is as follows. Catalyzes the reversible phosphatidyl group transfer from one phosphatidylglycerol molecule to another to form cardiolipin (CL) (diphosphatidylglycerol) and glycerol. This Buchnera aphidicola subsp. Baizongia pistaciae (strain Bp) protein is Cardiolipin synthase A.